Here is a 487-residue protein sequence, read N- to C-terminus: Malonate-semialdehyde dehydrogenase (487 aa).

Residues alanine 150, phenylalanine 152, lysine 176, glutamate 179, arginine 180, serine 229, and threonine 251 each contribute to the NAD(+) site. Cysteine 284 functions as the Nucleophile in the catalytic mechanism. An NAD(+)-binding site is contributed by glutamate 382.

It belongs to the aldehyde dehydrogenase family. IolA subfamily. Homotetramer.

The enzyme catalyses 3-oxopropanoate + NAD(+) + CoA + H2O = hydrogencarbonate + acetyl-CoA + NADH + H(+). The catalysed reaction is 2-methyl-3-oxopropanoate + NAD(+) + CoA + H2O = propanoyl-CoA + hydrogencarbonate + NADH + H(+). It functions in the pathway polyol metabolism; myo-inositol degradation into acetyl-CoA; acetyl-CoA from myo-inositol: step 7/7. In terms of biological role, catalyzes the oxidation of malonate semialdehyde (MSA) and methylmalonate semialdehyde (MMSA) into acetyl-CoA and propanoyl-CoA, respectively. Is involved in a myo-inositol catabolic pathway. Bicarbonate, and not CO2, is the end-product of the enzymatic reaction. In Bacillus velezensis (strain DSM 23117 / BGSC 10A6 / LMG 26770 / FZB42) (Bacillus amyloliquefaciens subsp. plantarum), this protein is Malonate-semialdehyde dehydrogenase.